Reading from the N-terminus, the 168-residue chain is Disulfide bond formation protein B 2 (168 aa).

Topologically, residues 1 to 9 (MLPARLRTF) are cytoplasmic. Residues 10 to 26 (FLPACLVALAVLVASFR) traverse the membrane as a helical segment. At 27-44 (LENTVGLMPCPLCLSQRL) the chain is on the periplasmic side. C36 and C39 are disulfide-bonded. A helical transmembrane segment spans residues 45 to 61 (LLGGYALLCFAAVLQAP). Residues 62–67 (GTRGIL) lie on the Cytoplasmic side of the membrane. A helical membrane pass occupies residues 68–85 (RYARLALGCSLAGALLAA). Over 86 to 140 (RHVWLQGAEGVNEVCPVPIGRVFEQSWSEAARQLLLGGPDCRSLAWSFLDLTLPE) the chain is Periplasmic. A disulfide bridge connects residues C100 and C126. Residues 141-159 (WSLLAFLLLAVLPLSCLLA) traverse the membrane as a helical segment. Residues 160 to 168 (YRFRTLART) lie on the Cytoplasmic side of the membrane.

It belongs to the DsbB family.

Its subcellular location is the cell inner membrane. In terms of biological role, required for disulfide bond formation in some periplasmic proteins. Acts by oxidizing the DsbA protein. The protein is Disulfide bond formation protein B 2 (dsbB2) of Pseudomonas putida (strain ATCC 47054 / DSM 6125 / CFBP 8728 / NCIMB 11950 / KT2440).